The primary structure comprises 106 residues: Large ribosomal subunit protein uL24 (106 aa).

It belongs to the universal ribosomal protein uL24 family. In terms of assembly, part of the 50S ribosomal subunit.

Its function is as follows. One of two assembly initiator proteins, it binds directly to the 5'-end of the 23S rRNA, where it nucleates assembly of the 50S subunit. Functionally, one of the proteins that surrounds the polypeptide exit tunnel on the outside of the subunit. The sequence is that of Large ribosomal subunit protein uL24 from Bordetella bronchiseptica (strain ATCC BAA-588 / NCTC 13252 / RB50) (Alcaligenes bronchisepticus).